A 217-amino-acid polypeptide reads, in one-letter code: 2-phospho-L-lactate guanylyltransferase (217 aa).

It belongs to the CofC family. In terms of assembly, homodimer.

It carries out the reaction (2S)-2-phospholactate + GTP + H(+) = (2S)-lactyl-2-diphospho-5'-guanosine + diphosphate. The protein operates within cofactor biosynthesis; coenzyme F420 biosynthesis. Functionally, guanylyltransferase that catalyzes the activation of (2S)-2-phospholactate (2-PL) as (2S)-lactyl-2-diphospho-5'-guanosine, via the condensation of 2-PL with GTP. It is involved in the biosynthesis of coenzyme F420, a hydride carrier cofactor. This Methanospirillum hungatei JF-1 (strain ATCC 27890 / DSM 864 / NBRC 100397 / JF-1) protein is 2-phospho-L-lactate guanylyltransferase.